Here is a 242-residue protein sequence, read N- to C-terminus: NAD(P)H-quinone oxidoreductase subunit K (242 aa).

Residues Cys59, Cys60, Cys124, and Cys155 each contribute to the [4Fe-4S] cluster site.

It belongs to the complex I 20 kDa subunit family. NDH-1 can be composed of about 15 different subunits; different subcomplexes with different compositions have been identified which probably have different functions. [4Fe-4S] cluster is required as a cofactor.

The protein resides in the cellular thylakoid membrane. The enzyme catalyses a plastoquinone + NADH + (n+1) H(+)(in) = a plastoquinol + NAD(+) + n H(+)(out). The catalysed reaction is a plastoquinone + NADPH + (n+1) H(+)(in) = a plastoquinol + NADP(+) + n H(+)(out). In terms of biological role, NDH-1 shuttles electrons from an unknown electron donor, via FMN and iron-sulfur (Fe-S) centers, to quinones in the respiratory and/or the photosynthetic chain. The immediate electron acceptor for the enzyme in this species is believed to be plastoquinone. Couples the redox reaction to proton translocation, and thus conserves the redox energy in a proton gradient. Cyanobacterial NDH-1 also plays a role in inorganic carbon-concentration. The polypeptide is NAD(P)H-quinone oxidoreductase subunit K (Synechococcus sp. (strain RCC307)).